The primary structure comprises 207 residues: Probable GTP-binding protein EngB (207 aa).

The region spanning 25 to 202 is the EngB-type G domain; the sequence is DVPEIAFVGR…ATLLWQWAHP (178 aa). GTP-binding positions include 33 to 40, 60 to 64, 82 to 85, 152 to 155, and 181 to 183; these read GRSNAGKS, GRTQH, DLPG, TKAD, and FSA. 2 residues coordinate Mg(2+): Ser40 and Thr62.

This sequence belongs to the TRAFAC class TrmE-Era-EngA-EngB-Septin-like GTPase superfamily. EngB GTPase family. It depends on Mg(2+) as a cofactor.

Its function is as follows. Necessary for normal cell division and for the maintenance of normal septation. In Albidiferax ferrireducens (strain ATCC BAA-621 / DSM 15236 / T118) (Rhodoferax ferrireducens), this protein is Probable GTP-binding protein EngB.